The following is a 64-amino-acid chain: uncharacterized protein (64 aa).

This is an uncharacterized protein from Mycoplasma (Bacteriophage L2).